The sequence spans 262 residues: Zinc finger protein 138 (262 aa).

Residues 110–132 form a C2H2-type 1 zinc finger; that stretch reads FRCKECDKSLCMLSRLTQHKKIH. A C2H2-type 2; degenerate zinc finger spans residues 138-160; the sequence is YKCEECGKTFNWSTNLSKPKKIH. The C2H2-type 3; degenerate zinc finger occupies 166–188; that stretch reads YKCEVCGKAFHQSSILTKHKIIR. Residues 194 to 216 form a C2H2-type 4 zinc finger; sequence YKCAHCGKAFKQSSHLTRHKIIH. A C2H2-type 5; degenerate zinc finger spans residues 222 to 244; that stretch reads YKCEQCGKVFKQSPTLTKHQIIY. The segment at 250–262 adopts a C2H2-type 6; degenerate zinc-finger fold; it reads YKCEECGKAFNLS.

This sequence belongs to the krueppel C2H2-type zinc-finger protein family.

It is found in the nucleus. Its function is as follows. May be involved in transcriptional regulation as a repressor. This is Zinc finger protein 138 (ZNF138) from Homo sapiens (Human).